A 366-amino-acid chain; its full sequence is Chorismate synthase (366 aa).

Arginine 48 lines the NADP(+) pocket. FMN contacts are provided by residues 125–127 (RSS), glycine 285, 300–304 (KPTPS), and arginine 327.

Belongs to the chorismate synthase family. The cofactor is FMNH2.

It carries out the reaction 5-O-(1-carboxyvinyl)-3-phosphoshikimate = chorismate + phosphate. Its pathway is metabolic intermediate biosynthesis; chorismate biosynthesis; chorismate from D-erythrose 4-phosphate and phosphoenolpyruvate: step 7/7. Functionally, catalyzes the anti-1,4-elimination of the C-3 phosphate and the C-6 proR hydrogen from 5-enolpyruvylshikimate-3-phosphate (EPSP) to yield chorismate, which is the branch point compound that serves as the starting substrate for the three terminal pathways of aromatic amino acid biosynthesis. This reaction introduces a second double bond into the aromatic ring system. The sequence is that of Chorismate synthase from Methanococcoides burtonii (strain DSM 6242 / NBRC 107633 / OCM 468 / ACE-M).